A 119-amino-acid polypeptide reads, in one-letter code: Ribonuclease P protein component (119 aa).

The protein belongs to the RnpA family. Consists of a catalytic RNA component (M1 or rnpB) and a protein subunit.

It carries out the reaction Endonucleolytic cleavage of RNA, removing 5'-extranucleotides from tRNA precursor.. Its function is as follows. RNaseP catalyzes the removal of the 5'-leader sequence from pre-tRNA to produce the mature 5'-terminus. It can also cleave other RNA substrates such as 4.5S RNA. The protein component plays an auxiliary but essential role in vivo by binding to the 5'-leader sequence and broadening the substrate specificity of the ribozyme. The sequence is that of Ribonuclease P protein component from Photorhabdus laumondii subsp. laumondii (strain DSM 15139 / CIP 105565 / TT01) (Photorhabdus luminescens subsp. laumondii).